The sequence spans 183 residues: Capsid protein (183 aa).

The tract at residues leucine 143 to cysteine 183 is disordered. The span at valine 149–glutamine 177 shows a compositional bias: basic residues. 3 positions are modified to phosphoserine; by host: serine 155, serine 162, and serine 170. Residues serine 155–proline 161 form a 1; half-length repeat. The tract at residues serine 155–glutamine 177 is 3 X 8 AA repeats of S-P-R-R-R-[PR]-S-Q. The short motif at arginine 158 to arginine 175 is the Bipartite nuclear localization signal element. Repeat copies occupy residues serine 162–glutamine 169 and serine 170–glutamine 177. The tract at residues glutamine 177–cysteine 183 is RNA binding.

The protein belongs to the orthohepadnavirus core antigen family. As to quaternary structure, homodimerizes, then multimerizes. Interacts with cytosol exposed regions of viral L glycoprotein present in the reticulum-to-Golgi compartment. Interacts with human FLNB. Phosphorylated form interacts with host importin alpha; this interaction depends on the exposure of the NLS, which itself depends upon genome maturation and/or phosphorylation of the capsid protein. Interacts with host NUP153. Phosphorylated by host SRPK1, SRPK2, and maybe protein kinase C or GAPDH. Phosphorylation is critical for pregenomic RNA packaging. Protein kinase C phosphorylation is stimulated by HBx protein and may play a role in transport of the viral genome to the nucleus at the late step during the viral replication cycle.

Its subcellular location is the virion. The protein resides in the host cytoplasm. Self assembles to form an icosahedral capsid. Most capsids appear to be large particles with an icosahedral symmetry of T=4 and consist of 240 copies of capsid protein, though a fraction forms smaller T=3 particles consisting of 180 capsid proteins. Entering capsids are transported along microtubules to the nucleus. Phosphorylation of the capsid is thought to induce exposure of nuclear localization signal in the C-terminal portion of the capsid protein that allows binding to the nuclear pore complex via the importin (karyopherin-) alpha and beta. Capsids are imported in intact form through the nuclear pore into the nuclear basket, where it probably binds NUP153. Only capsids that contain the mature viral genome can release the viral DNA and capsid protein into the nucleoplasm. Immature capsids get stuck in the basket. Capsids encapsulate the pre-genomic RNA and the P protein. Pre-genomic RNA is reverse-transcribed into DNA while the capsid is still in the cytoplasm. The capsid can then either be directed to the nucleus, providing more genomes for transcription, or bud through the endoplasmic reticulum to provide new virions. This Homo sapiens (Human) protein is Capsid protein.